A 78-amino-acid polypeptide reads, in one-letter code: Dihydrofolate reductase type 2 (78 aa).

NADP(+)-binding positions include Lys-32 and 66–69; that span reads VQIY. Ile-68 lines the substrate pocket.

As to quaternary structure, homotetramer.

The enzyme catalyses (6S)-5,6,7,8-tetrahydrofolate + NADP(+) = 7,8-dihydrofolate + NADPH + H(+). It functions in the pathway cofactor biosynthesis; tetrahydrofolate biosynthesis; 5,6,7,8-tetrahydrofolate from 7,8-dihydrofolate: step 1/1. Functionally, key enzyme in folate metabolism. Catalyzes an essential reaction for de novo glycine and purine synthesis, and for DNA precursor synthesis. This Escherichia coli protein is Dihydrofolate reductase type 2.